A 501-amino-acid chain; its full sequence is Dynein regulatory complex subunit 5 (501 aa).

The segment covering 1–23 has biased composition (polar residues); it reads MQDTVTTSALLDPSHSSVSTQDN. 2 disordered regions span residues 1–56 and 202–222; these read MQDT…HPRA and LPAQLRPGDQSDSGSEGEMEE. The span at 24–34 shows a compositional bias: low complexity; sequence SSTGGHTSSTS. 5 LRR repeats span residues 308–321, 335–355, 363–383, 391–411, and 419–439; these read VLEELDLSQNLIGD, RLRVLNLANNQVRAPGAQSLA, NLISLNLRLNCIEDEGGQALA, CLTTLHLGGNELSEPTATLLS, and TLTSINLSCNHIGLDGGKQLL.

The protein belongs to the DRC5 family. As to quaternary structure, component of the nexin-dynein regulatory complex (N-DRC). Interacts with DRC1. Interacts with FBXL13/DRC6, DRC3 and DRC7.

It is found in the cell projection. The protein localises to the cilium. Its subcellular location is the flagellum. It localises to the cytoplasm. The protein resides in the cytoskeleton. It is found in the flagellum axoneme. Component of the nexin-dynein regulatory complex (N-DRC) a key regulator of ciliary/flagellar motility which maintains the alignment and integrity of the distal axoneme and regulates microtubule sliding in motile axonemes. May play a role in the assembly of N-DRC. May be required for sperm motility. This Homo sapiens (Human) protein is Dynein regulatory complex subunit 5 (TCTE1).